The sequence spans 1214 residues: BOS complex subunit NOMO1 (1214 aa).

An N-terminal signal peptide occupies residues 1–23 (MRAGRCAAALLLLLLSGAGRAIG). Over 24–1150 (SEDIVVGCGG…RKLPEQDIAQ (1127 aa)) the chain is Extracellular. Asn-42, Asn-210, and Asn-610 each carry an N-linked (GlcNAc...) asparagine glycan. Residues 692-720 (KSAQELRREQQLAEIETRRQEREKNGKEE) are a coiled coil. The segment covering 708-726 (TRRQEREKNGKEEGEEGRA) has biased composition (basic and acidic residues). Residues 708 to 733 (TRRQEREKNGKEEGEEGRARPPGQEM) form a disordered region. Residues 1151–1167 (GSYIALPLTLLLLLAGY) traverse the membrane as a helical segment. Residues 1168 to 1214 (NHDKLIPLLLQLTSRLQGVRALGQAASDSSGPEDMKRQTKKQKTRRT) lie on the Cytoplasmic side of the membrane. Residues 1190 to 1214 (GQAASDSSGPEDMKRQTKKQKTRRT) form a disordered region. Residues Ser-1196 and Ser-1197 each carry the phosphoserine modification. Positions 1205–1214 (QTKKQKTRRT) are enriched in basic residues.

In terms of assembly, component of the back of Sec61 (BOS) complex, composed of NCLN/Nicalin, NOMO (NOMO1, NOMO2 or NOMO3) and TMEM147. The BOS complex is part of the multi-pass translocon (MPT) complex, composed of three subcomplexes, the GEL complex (composed of RAB5IF/OPTI and TMCO1), the BOS complex (composed of NCLN/Nicalin, NOMO and TMEM147) and the PAT complex (composed of WDR83OS/Asterix and CCDC47). The MPT complex associates with the SEC61 complex.

It localises to the endoplasmic reticulum membrane. Functionally, component of the multi-pass translocon (MPT) complex that mediates insertion of multi-pass membrane proteins into the lipid bilayer of membranes. The MPT complex takes over after the SEC61 complex: following membrane insertion of the first few transmembrane segments of proteins by the SEC61 complex, the MPT complex occludes the lateral gate of the SEC61 complex to promote insertion of subsequent transmembrane regions. The polypeptide is BOS complex subunit NOMO1 (Mus musculus (Mouse)).